A 292-amino-acid chain; its full sequence is 33 kDa chaperonin (292 aa).

Disulfide bonds link cysteine 230/cysteine 232 and cysteine 263/cysteine 266.

The protein belongs to the HSP33 family. In terms of processing, under oxidizing conditions two disulfide bonds are formed involving the reactive cysteines. Under reducing conditions zinc is bound to the reactive cysteines and the protein is inactive.

The protein resides in the cytoplasm. Redox regulated molecular chaperone. Protects both thermally unfolding and oxidatively damaged proteins from irreversible aggregation. Plays an important role in the bacterial defense system toward oxidative stress. The polypeptide is 33 kDa chaperonin (Escherichia coli O7:K1 (strain IAI39 / ExPEC)).